Here is a 512-residue protein sequence, read N- to C-terminus: Sorting nexin MVP1 (512 aa).

Positions 1–24 (MDLEADPWRVNSEENGNNISGSVW) are disordered. Over residues 13 to 22 (EENGNNISGS) the composition is skewed to low complexity. Residues 130–248 (AEDIVSVEEI…LTFLTVPTDL (119 aa)) enclose the PX domain. Residues R174, S176, K200, and R215 each contribute to the a 1,2-diacyl-sn-glycero-3-phospho-(1D-myo-inositol-3-phosphate) site.

Belongs to the sorting nexin family.

The protein localises to the cytoplasm. Its subcellular location is the membrane. Required for vacuolar protein sorting. This is Sorting nexin MVP1 (MVP1) from Kluyveromyces lactis (strain ATCC 8585 / CBS 2359 / DSM 70799 / NBRC 1267 / NRRL Y-1140 / WM37) (Yeast).